Consider the following 495-residue polypeptide: UPF0371 protein CE2832 (495 aa).

The protein belongs to the UPF0371 family.

This chain is UPF0371 protein CE2832, found in Corynebacterium efficiens (strain DSM 44549 / YS-314 / AJ 12310 / JCM 11189 / NBRC 100395).